Consider the following 462-residue polypeptide: tRNA modification GTPase MnmE (462 aa).

Positions 23, 88, and 127 each coordinate (6S)-5-formyl-5,6,7,8-tetrahydrofolate. Residues 224 to 383 (GLATVIIGRP…LEKAIADLFF (160 aa)) form the TrmE-type G domain. N234 contacts K(+). GTP-binding positions include 234 to 239 (NVGKSS), 253 to 259 (TDIPGTT), and 278 to 281 (DTAG). S238 is a binding site for Mg(2+). Residues T253, I255, and T258 each contribute to the K(+) site. T259 contributes to the Mg(2+) binding site. K462 is a (6S)-5-formyl-5,6,7,8-tetrahydrofolate binding site.

It belongs to the TRAFAC class TrmE-Era-EngA-EngB-Septin-like GTPase superfamily. TrmE GTPase family. As to quaternary structure, homodimer. Heterotetramer of two MnmE and two MnmG subunits. It depends on K(+) as a cofactor.

The protein resides in the cytoplasm. Functionally, exhibits a very high intrinsic GTPase hydrolysis rate. Involved in the addition of a carboxymethylaminomethyl (cmnm) group at the wobble position (U34) of certain tRNAs, forming tRNA-cmnm(5)s(2)U34. This is tRNA modification GTPase MnmE from Geobacillus kaustophilus (strain HTA426).